The sequence spans 257 residues: Gasdermin-like protein rcd-1-1 (257 aa).

This sequence belongs to the gasdermin family. Heterooligomer; the heterooligomer with rcd-1-2 forms a ring-shaped pore complex when inserted in the membrane.

Its subcellular location is the cytoplasm. The protein resides in the cell membrane. Its function is as follows. Gasdermin-like protein involved in heterokaryon incompatibility, a process that ensures that during spontaneous vegetative cell fusion, only compatible cells from the same colony survive (non-self-recognition). In N.crassa, the rcd-1 locus exists as 2 incompatible alleles, rcd-1-1 (this entry) and rcd-1-2 (AC P0DW10). During the allorecognition process, forms a heterooligomer with rcd-1-2, thereby forming a functional gasdermin-like complex that binds to membranes and forms pores, triggering cell death. Binds negatively charged phospholipids, such as cardiolipin and phosphatidylserine. Also binds to phosphoinositides, preferentially to phosphatidylinositol-3-phosphate (PtdIns-3-P), PtdIns-5-P and PtdIns-3,5-P2. The protein is Gasdermin-like protein rcd-1-1 of Neurospora crassa (strain ATCC 24698 / 74-OR23-1A / CBS 708.71 / DSM 1257 / FGSC 987).